Here is a 111-residue protein sequence, read N- to C-terminus: Disintegrin DS-AN (111 aa).

Residues 1 to 20 (MIQVLLVIICLAVFPYQGSC) form the signal peptide. The propeptide occupies 21-47 (IILESGNVNDYEIVYPKKLIVLPTGAM). In terms of domain architecture, Disintegrin spans 47 to 111 (MNSPHPCCDP…PDCPRNPYKD (65 aa)). 4 disulfides stabilise this stretch: C53/C76, C67/C73, C72/C97, and C85/C104. Residues 89-91 (RGD) carry the Cell attachment site motif.

As to quaternary structure, heterodimer; disulfide-linked.

It is found in the secreted. Its function is as follows. Inhibits ADP-induced platelet aggregation in human platelet-rich plasma (IC(50) is 8 uM). This Atheris nitschei (Great lakes bush viper) protein is Disintegrin DS-AN.